We begin with the raw amino-acid sequence, 156 residues long: Small ribosomal subunit protein uS7cz/uS7cy (156 aa).

Belongs to the universal ribosomal protein uS7 family. In terms of assembly, part of the 30S ribosomal subunit.

The protein resides in the plastid. It is found in the chloroplast. Its function is as follows. One of the primary rRNA binding proteins, it binds directly to 16S rRNA where it nucleates assembly of the head domain of the 30S subunit. The polypeptide is Small ribosomal subunit protein uS7cz/uS7cy (rps7-A) (Saccharum hybrid (Sugarcane)).